The chain runs to 269 residues: uncharacterized protein (269 aa).

Residues 181–191 (QKKELSPHEIA) show a composition bias toward basic and acidic residues. The interval 181–203 (QKKELSPHEIAESPSSHSTSPMG) is disordered. Residues 193–202 (SPSSHSTSPM) show a composition bias toward polar residues. Ser200 carries the phosphoserine modification.

This is an uncharacterized protein from Schizosaccharomyces pombe (strain 972 / ATCC 24843) (Fission yeast).